Consider the following 257-residue polypeptide: Type III pantothenate kinase (257 aa).

6-13 (DCGNTNTV) provides a ligand contact to ATP. 107–110 (GPDR) is a binding site for substrate. The Proton acceptor role is filled by aspartate 109. Aspartate 129 contacts K(+). An ATP-binding site is contributed by threonine 132. Residue threonine 184 coordinates substrate.

It belongs to the type III pantothenate kinase family. As to quaternary structure, homodimer. NH4(+) serves as cofactor. Requires K(+) as cofactor.

Its subcellular location is the cytoplasm. The enzyme catalyses (R)-pantothenate + ATP = (R)-4'-phosphopantothenate + ADP + H(+). Its pathway is cofactor biosynthesis; coenzyme A biosynthesis; CoA from (R)-pantothenate: step 1/5. In terms of biological role, catalyzes the phosphorylation of pantothenate (Pan), the first step in CoA biosynthesis. The sequence is that of Type III pantothenate kinase from Roseobacter denitrificans (strain ATCC 33942 / OCh 114) (Erythrobacter sp. (strain OCh 114)).